Here is a 249-residue protein sequence, read N- to C-terminus: Enolase-phosphatase E1 (249 aa).

Mg(2+) contacts are provided by Asp14 and Glu16. Substrate contacts are provided by residues 141-142 and Lys175; that span reads SS. Asp200 contacts Mg(2+).

Belongs to the HAD-like hydrolase superfamily. MasA/MtnC family. In terms of assembly, monomer. It depends on Mg(2+) as a cofactor.

The protein resides in the cytoplasm. It is found in the nucleus. The catalysed reaction is 5-methylsulfanyl-2,3-dioxopentyl phosphate + H2O = 1,2-dihydroxy-5-(methylsulfanyl)pent-1-en-3-one + phosphate. Its pathway is amino-acid biosynthesis; L-methionine biosynthesis via salvage pathway; L-methionine from S-methyl-5-thio-alpha-D-ribose 1-phosphate: step 3/6. It functions in the pathway amino-acid biosynthesis; L-methionine biosynthesis via salvage pathway; L-methionine from S-methyl-5-thio-alpha-D-ribose 1-phosphate: step 4/6. In terms of biological role, bifunctional enzyme that catalyzes the enolization of 2,3-diketo-5-methylthiopentyl-1-phosphate (DK-MTP-1-P) into the intermediate 2-hydroxy-3-keto-5-methylthiopentenyl-1-phosphate (HK-MTPenyl-1-P), which is then dephosphorylated to form the acireductone 1,2-dihydroxy-3-keto-5-methylthiopentene (DHK-MTPene). This Drosophila virilis (Fruit fly) protein is Enolase-phosphatase E1.